A 293-amino-acid polypeptide reads, in one-letter code: MSLIDWFAARRKDQFVGKVSQDTDEGDGLWVKCSECSQVAYRKDLISNFNVCSNCNHHNRINSDERINIVADKDSFKEFDSSLSPTDPLGFKDRRSYADRIKDSQTSTGLRDGVITGFCSVNSMPLALAVMDFRFMGGSMGSVVGEKITRIIERATKKNYPILIVCASGGARMQEGMLSLMQMAKISGALKKHKEKNLLYMPLLTHPTTGGVTASFAMLGDLILAEPKALIGFAGRRVIEQTLREKLPDNFQTAEYLLEHGFVDVIVKRRELKTTLTKILKIHGVNELVEANI.

The CoA carboxyltransferase N-terminal domain occupies 29–293 (LWVKCSECSQ…GVNELVEANI (265 aa)). Zn(2+)-binding residues include cysteine 33, cysteine 36, cysteine 52, and cysteine 55. The segment at 33–55 (CSECSQVAYRKDLISNFNVCSNC) adopts a C4-type zinc-finger fold.

Belongs to the AccD/PCCB family. Acetyl-CoA carboxylase is a heterohexamer composed of biotin carboxyl carrier protein (AccB), biotin carboxylase (AccC) and two subunits each of ACCase subunit alpha (AccA) and ACCase subunit beta (AccD). Requires Zn(2+) as cofactor.

Its subcellular location is the cytoplasm. The enzyme catalyses N(6)-carboxybiotinyl-L-lysyl-[protein] + acetyl-CoA = N(6)-biotinyl-L-lysyl-[protein] + malonyl-CoA. It participates in lipid metabolism; malonyl-CoA biosynthesis; malonyl-CoA from acetyl-CoA: step 1/1. Its function is as follows. Component of the acetyl coenzyme A carboxylase (ACC) complex. Biotin carboxylase (BC) catalyzes the carboxylation of biotin on its carrier protein (BCCP) and then the CO(2) group is transferred by the transcarboxylase to acetyl-CoA to form malonyl-CoA. The chain is Acetyl-coenzyme A carboxylase carboxyl transferase subunit beta from Prochlorococcus marinus (strain MIT 9215).